We begin with the raw amino-acid sequence, 331 residues long: Adenosine deaminase (331 aa).

The Zn(2+) site is built by histidine 12 and histidine 14. 3 residues coordinate substrate: histidine 14, aspartate 16, and glycine 170. Histidine 197 is a binding site for Zn(2+). Glutamate 200 (proton donor) is an active-site residue. Residue aspartate 278 participates in Zn(2+) binding. Aspartate 279 serves as a coordination point for substrate.

It belongs to the metallo-dependent hydrolases superfamily. Adenosine and AMP deaminases family. Adenosine deaminase subfamily. The cofactor is Zn(2+).

The catalysed reaction is adenosine + H2O + H(+) = inosine + NH4(+). It catalyses the reaction 2'-deoxyadenosine + H2O + H(+) = 2'-deoxyinosine + NH4(+). Catalyzes the hydrolytic deamination of adenosine and 2-deoxyadenosine. In Shewanella sp. (strain MR-4), this protein is Adenosine deaminase.